A 217-amino-acid polypeptide reads, in one-letter code: Adenylate kinase (217 aa).

ATP is bound at residue 10 to 15 (GAGKGT). The segment at 30–59 (STGDIFRAAMKNETPMGIEAKKYIDKGELV) is NMP. AMP-binding positions include Thr-31, Arg-36, 57 to 59 (ELV), 85 to 88 (GFPR), and Gln-92. An LID region spans residues 126–164 (GRFICRNCGATYHKLYNAPKVEGTCDVCGHHEFYQRDDD). Arg-127 lines the ATP pocket. The Zn(2+) site is built by Cys-130 and Cys-133. 136–137 (TY) is an ATP binding site. Residues Cys-150 and Cys-153 each contribute to the Zn(2+) site. The AMP site is built by Arg-161 and Arg-172. Gln-200 serves as a coordination point for ATP.

Belongs to the adenylate kinase family. As to quaternary structure, monomer.

It localises to the cytoplasm. The catalysed reaction is AMP + ATP = 2 ADP. It functions in the pathway purine metabolism; AMP biosynthesis via salvage pathway; AMP from ADP: step 1/1. Functionally, catalyzes the reversible transfer of the terminal phosphate group between ATP and AMP. Plays an important role in cellular energy homeostasis and in adenine nucleotide metabolism. In Limosilactobacillus reuteri subsp. reuteri (strain JCM 1112) (Lactobacillus reuteri), this protein is Adenylate kinase.